Reading from the N-terminus, the 262-residue chain is Hydroxyethylthiazole kinase (262 aa).

Met50 provides a ligand contact to substrate. Positions 125 and 171 each coordinate ATP. Gly198 is a binding site for substrate.

Belongs to the Thz kinase family. It depends on Mg(2+) as a cofactor.

It carries out the reaction 5-(2-hydroxyethyl)-4-methylthiazole + ATP = 4-methyl-5-(2-phosphooxyethyl)-thiazole + ADP + H(+). It participates in cofactor biosynthesis; thiamine diphosphate biosynthesis; 4-methyl-5-(2-phosphoethyl)-thiazole from 5-(2-hydroxyethyl)-4-methylthiazole: step 1/1. In terms of biological role, catalyzes the phosphorylation of the hydroxyl group of 4-methyl-5-beta-hydroxyethylthiazole (THZ). This Escherichia fergusonii (strain ATCC 35469 / DSM 13698 / CCUG 18766 / IAM 14443 / JCM 21226 / LMG 7866 / NBRC 102419 / NCTC 12128 / CDC 0568-73) protein is Hydroxyethylthiazole kinase.